Consider the following 396-residue polypeptide: Large ribosomal subunit protein uL4A (396 aa).

The segment covering 352–373 (KAKEKKPDDGKPKAKKPLDAKT) has biased composition (basic and acidic residues). Residues 352-374 (KAKEKKPDDGKPKAKKPLDAKTK) are disordered.

This sequence belongs to the universal ribosomal protein uL4 family. In terms of assembly, component of the large ribosomal subunit.

It localises to the cytoplasm. In terms of biological role, component of the large ribosomal subunit. The ribosome is a large ribonucleoprotein complex responsible for the synthesis of proteins in the cell. The protein is Large ribosomal subunit protein uL4A (rpl4-a) of Xenopus laevis (African clawed frog).